The sequence spans 104 residues: Putative pterin-4-alpha-carbinolamine dehydratase (104 aa).

The protein belongs to the pterin-4-alpha-carbinolamine dehydratase family.

The enzyme catalyses (4aS,6R)-4a-hydroxy-L-erythro-5,6,7,8-tetrahydrobiopterin = (6R)-L-erythro-6,7-dihydrobiopterin + H2O. The chain is Putative pterin-4-alpha-carbinolamine dehydratase (pcbD) from Rhizobium meliloti (strain 1021) (Ensifer meliloti).